Consider the following 397-residue polypeptide: Tyrosine--tRNA ligase (397 aa).

Residues 39–48 (PTAPDLHLGH) carry the 'HIGH' region motif. The short motif at 223–227 (KMSKS) is the 'KMSKS' region element. Residue K226 coordinates ATP. The region spanning 334–395 (YPIANLVHDL…GKRKFAKIRL (62 aa)) is the S4 RNA-binding domain.

The protein belongs to the class-I aminoacyl-tRNA synthetase family. TyrS type 2 subfamily. In terms of assembly, homodimer.

It localises to the cytoplasm. It carries out the reaction tRNA(Tyr) + L-tyrosine + ATP = L-tyrosyl-tRNA(Tyr) + AMP + diphosphate + H(+). In terms of biological role, catalyzes the attachment of tyrosine to tRNA(Tyr) in a two-step reaction: tyrosine is first activated by ATP to form Tyr-AMP and then transferred to the acceptor end of tRNA(Tyr). The sequence is that of Tyrosine--tRNA ligase from Methylococcus capsulatus (strain ATCC 33009 / NCIMB 11132 / Bath).